The chain runs to 184 residues: Shikimate kinase (184 aa).

Gly-20–Arg-25 serves as a coordination point for ATP. Residue Ser-24 coordinates Mg(2+). 3 residues coordinate substrate: Asp-42, Arg-66, and Gly-88. An ATP-binding site is contributed by Arg-127. Residue Arg-146 participates in substrate binding. Arg-162 is a binding site for ATP.

Belongs to the shikimate kinase family. In terms of assembly, monomer. Requires Mg(2+) as cofactor.

The protein localises to the cytoplasm. It carries out the reaction shikimate + ATP = 3-phosphoshikimate + ADP + H(+). It participates in metabolic intermediate biosynthesis; chorismate biosynthesis; chorismate from D-erythrose 4-phosphate and phosphoenolpyruvate: step 5/7. In terms of biological role, catalyzes the specific phosphorylation of the 3-hydroxyl group of shikimic acid using ATP as a cosubstrate. The sequence is that of Shikimate kinase from Thermus thermophilus (strain ATCC BAA-163 / DSM 7039 / HB27).